Here is a 577-residue protein sequence, read N- to C-terminus: Urease subunit alpha (577 aa).

Residues G136–F577 enclose the Urease domain. Residues H141, H143, and K224 each contribute to the Ni(2+) site. N6-carboxylysine is present on K224. Position 226 (H226) interacts with substrate. Positions 253 and 279 each coordinate Ni(2+). H327 serves as the catalytic Proton donor. D367 lines the Ni(2+) pocket.

It belongs to the metallo-dependent hydrolases superfamily. Urease alpha subunit family. In terms of assembly, heterotrimer of UreA (gamma), UreB (beta) and UreC (alpha) subunits. Three heterotrimers associate to form the active enzyme. Ni cation is required as a cofactor. Carboxylation allows a single lysine to coordinate two nickel ions.

It localises to the cytoplasm. It carries out the reaction urea + 2 H2O + H(+) = hydrogencarbonate + 2 NH4(+). It functions in the pathway nitrogen metabolism; urea degradation; CO(2) and NH(3) from urea (urease route): step 1/1. This Mycobacterium bovis (strain ATCC BAA-935 / AF2122/97) protein is Urease subunit alpha.